The sequence spans 414 residues: Serine--tRNA ligase (414 aa).

L-serine is bound at residue 230–232 (TSE). 261–263 (RQE) lines the ATP pocket. L-serine is bound at residue Glu-284. 348 to 351 (EISS) is an ATP binding site. Ser-382 provides a ligand contact to L-serine.

It belongs to the class-II aminoacyl-tRNA synthetase family. Type-1 seryl-tRNA synthetase subfamily. As to quaternary structure, homodimer. The tRNA molecule binds across the dimer.

It is found in the cytoplasm. The enzyme catalyses tRNA(Ser) + L-serine + ATP = L-seryl-tRNA(Ser) + AMP + diphosphate + H(+). It catalyses the reaction tRNA(Sec) + L-serine + ATP = L-seryl-tRNA(Sec) + AMP + diphosphate + H(+). The protein operates within aminoacyl-tRNA biosynthesis; selenocysteinyl-tRNA(Sec) biosynthesis; L-seryl-tRNA(Sec) from L-serine and tRNA(Sec): step 1/1. Functionally, catalyzes the attachment of serine to tRNA(Ser). Is also able to aminoacylate tRNA(Sec) with serine, to form the misacylated tRNA L-seryl-tRNA(Sec), which will be further converted into selenocysteinyl-tRNA(Sec). In Campylobacter concisus (strain 13826), this protein is Serine--tRNA ligase.